Reading from the N-terminus, the 441-residue chain is G-protein coupled receptor family C group 5 member C (441 aa).

An N-terminal signal peptide occupies residues 1-23 (MAIHKALVMCLGLPLFLFPGAWA). Over 24-50 (QGHVPPGCSQGLNPLYYNLCDRSGAWG) the chain is Extracellular. A helical transmembrane segment spans residues 51-71 (IVLEAVAGAGIVTTFVLTIIL). Residues 72–85 (VASLPFVQDTKKRS) lie on the Cytoplasmic side of the membrane. A helical membrane pass occupies residues 86-106 (LLGTQVFFLLGTLGLFCLVFA). Topologically, residues 107–120 (CVVKPDFSTCASRR) are extracellular. A helical transmembrane segment spans residues 121-141 (FLFGVLFAICFSCLAAHVFAL). Residues 142–155 (NFLARKNHGPRGWV) are Cytoplasmic-facing. Residues 156–176 (IFTVALLLTLVEVIINTEWLI) form a helical membrane-spanning segment. Topologically, residues 177–208 (ITLVRGSGEGGPQGNSSAGWAVASPCAIANMD) are extracellular. A glycan (N-linked (GlcNAc...) asparagine) is linked at Asn191. A helical membrane pass occupies residues 209-229 (FVMALIYVMLLLLGAFLGAWP). The Cytoplasmic portion of the chain corresponds to 230-241 (ALCGRYKRWRKH). A helical membrane pass occupies residues 242–262 (GVFVLLTTATSVAIWVVWIVM). The Extracellular segment spans residues 263-279 (YTYGNKQHNSPTWDDPT). A helical membrane pass occupies residues 280 to 300 (LAIALAANAWAFVLFYVIPEV). Residues 301-441 (SQVTKSSPEQ…QVFRNPYVWD (141 aa)) are Cytoplasmic-facing. Phosphoserine occurs at positions 344, 383, 403, and 406. The disordered stretch occupies residues 412 to 441 (DMYSAQSHQAATPPKDGKNSQVFRNPYVWD). Residue Tyr414 is modified to Phosphotyrosine. Thr423 carries the post-translational modification Phosphothreonine.

The protein belongs to the G-protein coupled receptor 3 family. As to expression, expression is highest in the periphery, particularly in the stomach, but also in the kidney, liver, pancreas, and prostate. In brain, levels of expression are generally lower than in the periphery, with the exception of cerebellum, spinal cord, and dorsal root ganglia (DRG).

The protein resides in the cell membrane. It localises to the cytoplasmic vesicle membrane. Functionally, this retinoic acid-inducible G-protein coupled receptor provide evidence for a possible interaction between retinoid and G-protein signaling pathways. This Homo sapiens (Human) protein is G-protein coupled receptor family C group 5 member C (GPRC5C).